An 89-amino-acid polypeptide reads, in one-letter code: Small ribosomal subunit protein uS15 (89 aa).

This sequence belongs to the universal ribosomal protein uS15 family. As to quaternary structure, part of the 30S ribosomal subunit. Forms a bridge to the 50S subunit in the 70S ribosome, contacting the 23S rRNA.

Its function is as follows. One of the primary rRNA binding proteins, it binds directly to 16S rRNA where it helps nucleate assembly of the platform of the 30S subunit by binding and bridging several RNA helices of the 16S rRNA. In terms of biological role, forms an intersubunit bridge (bridge B4) with the 23S rRNA of the 50S subunit in the ribosome. The protein is Small ribosomal subunit protein uS15 of Lactobacillus johnsonii (strain CNCM I-12250 / La1 / NCC 533).